The primary structure comprises 403 residues: Phospholipase A1-II 2 (403 aa).

Ser-218 acts as the Acyl-ester intermediate in catalysis. Active-site charge relay system residues include Ser-218, Asp-286, and His-323. Positions 381–403 (GPDGRWVLQDHEPDDDDDDDDDD) are disordered. Residues 392–403 (EPDDDDDDDDDD) are compositionally biased toward acidic residues.

It belongs to the AB hydrolase superfamily. Lipase family.

It is found in the cytoplasm. In terms of biological role, acylhydrolase that catalyzes the hydrolysis of phospholipids at the sn-1 position. This chain is Phospholipase A1-II 2, found in Oryza sativa subsp. indica (Rice).